The following is a 175-amino-acid chain: Gamma-crystallin M1 (175 aa).

Beta/gamma crystallin 'Greek key' domains are found at residues 2–40, 41–86, 89–121, and 130–172; these read GKII…RVES, GCFM…RYPY, FRMR…RMSD, and GHWL…RRIT.

This sequence belongs to the beta/gamma-crystallin family. Monomer.

Functionally, crystallins are the dominant structural components of the vertebrate eye lens. In Chiloscyllium indicum (Slender bamboo shark), this protein is Gamma-crystallin M1 (GM1).